The following is a 396-amino-acid chain: Probable glucan endo-1,6-beta-glucosidase B (396 aa).

Residues 1-17 (MIRRLAAFSALSGLATA) form the signal peptide. N-linked (GlcNAc...) asparagine glycosylation occurs at N30. Catalysis depends on E219, which acts as the Proton donor. N-linked (GlcNAc...) asparagine glycosylation is present at N272. E320 acts as the Nucleophile in catalysis.

It belongs to the glycosyl hydrolase 5 (cellulase A) family.

It localises to the secreted. It carries out the reaction Random hydrolysis of (1-&gt;6)-linkages in (1-&gt;6)-beta-D-glucans.. In terms of biological role, beta-glucanases participate in the metabolism of beta-glucan, the main structural component of the cell wall. Acts on lutean, pustulan and 1,6-oligo-beta-D-glucosides. The chain is Probable glucan endo-1,6-beta-glucosidase B (exgB) from Aspergillus fumigatus (strain CBS 144.89 / FGSC A1163 / CEA10) (Neosartorya fumigata).